The primary structure comprises 141 residues: MAIEKTLSIVKPNAVKKNVIGDIYSRFEKAGLKIVAAKMTQLDDDRAGGFYEEHKARPFFGELVEFMTSGPVLIQVLEGENAVALNREIMGATNPENAAEGTIRKDFADSLSENAVHGSDSTESAAREIAYFFDAAEIFSR.

The ATP site is built by Lys-11, Phe-59, Arg-87, Thr-93, Arg-104, and Asn-114. His-117 serves as the catalytic Pros-phosphohistidine intermediate.

The protein belongs to the NDK family. Homotetramer. It depends on Mg(2+) as a cofactor.

It is found in the cytoplasm. The catalysed reaction is a 2'-deoxyribonucleoside 5'-diphosphate + ATP = a 2'-deoxyribonucleoside 5'-triphosphate + ADP. The enzyme catalyses a ribonucleoside 5'-diphosphate + ATP = a ribonucleoside 5'-triphosphate + ADP. Functionally, major role in the synthesis of nucleoside triphosphates other than ATP. The ATP gamma phosphate is transferred to the NDP beta phosphate via a ping-pong mechanism, using a phosphorylated active-site intermediate. The chain is Nucleoside diphosphate kinase from Teredinibacter turnerae (strain ATCC 39867 / T7901).